The primary structure comprises 187 residues: UPF0301 protein YqgE (187 aa).

It belongs to the UPF0301 (AlgH) family.

The protein is UPF0301 protein YqgE of Salmonella agona (strain SL483).